A 243-amino-acid chain; its full sequence is Cell division protein FtsQ (243 aa).

The Cytoplasmic portion of the chain corresponds to 1-19 (MKRYNAKRKTHRNLKSIKK). The chain crosses the membrane as a helical span at residues 20–40 (LIPTVLALLAFVSLLAGIITL). Residues 41-243 (HNPKTLPFRQ…SNGLAIQWKN (203 aa)) are Periplasmic-facing. In terms of domain architecture, POTRA spans 46 to 115 (LPFRQIKITV…NELEIQVEEQ (70 aa)).

Belongs to the FtsQ/DivIB family. FtsQ subfamily. As to quaternary structure, part of a complex composed of FtsB, FtsL and FtsQ.

It localises to the cell inner membrane. Functionally, essential cell division protein. May link together the upstream cell division proteins, which are predominantly cytoplasmic, with the downstream cell division proteins, which are predominantly periplasmic. May control correct divisome assembly. This is Cell division protein FtsQ from Coxiella burnetii (strain RSA 493 / Nine Mile phase I).